Consider the following 209-residue polypeptide: Glycolipid transfer protein A (209 aa).

2 repeat units span residues 45–55 (IKADITGNITK) and 56–66 (IRSVYESNPTK). The segment at 45-66 (IKADITGNITKIRSVYESNPTK) is 2 X 12 AA approximate tandem repeats. 48–55 (DITGNITK) lines the beta-D-galactosyl-(1-&gt;4)-beta-D-glucosyl-(1&lt;-&gt;1)-N-[(9Z)-octadecenoyl]-sphing-4-enine pocket. Beta-D-galactosyl-(1-&gt;4)-beta-D-glucosyl-(1&lt;-&gt;1)-N-[(9Z)-octadecenoyl]-sphing-4-enine contacts are provided by histidine 140 and tyrosine 207.

Belongs to the GLTP family.

The protein resides in the cytoplasm. Accelerates the intermembrane transfer of various glycolipids. Catalyzes the transfer of various glycosphingolipids between membranes but does not catalyze the transfer of phospholipids. May be involved in the intracellular translocation of glucosylceramides. This is Glycolipid transfer protein A (gltp-a) from Xenopus laevis (African clawed frog).